The chain runs to 316 residues: Very-long-chain 3-oxooacyl-coA reductase let-767 (316 aa).

Residues Ala-47–Leu-76 and Asp-106 each bind NADP(+). Substrate is bound at residue Ser-189. Tyr-202 acts as the Proton acceptor in catalysis. Lys-206 provides a ligand contact to NADP(+).

Belongs to the short-chain dehydrogenases/reductases (SDR) family. 17-beta-HSD 3 subfamily. Expressed in the gut of larva and adult.

The catalysed reaction is a very-long-chain (3R)-3-hydroxyacyl-CoA + NADP(+) = a very-long-chain 3-oxoacyl-CoA + NADPH + H(+). It carries out the reaction (omega-1)-methyl-(3R)-hydroxy-fatty acyl-CoA + NADP(+) = (omega-1)-methyl-3-oxo-fatty acyl-CoA + NADPH + H(+). The enzyme catalyses a 17beta-hydroxy steroid + NADP(+) = a 17-oxo steroid + NADPH + H(+). The protein operates within lipid metabolism; fatty acid biosynthesis. Required for branched-chain fatty acid synthesis (such as (omega-1)-methyl-fatty acids). Catalyzes the reduction of the 3-keto-fatty acyl-CoA intermediate that is formed in each cycle of fatty acid elongation. Very long-chain fatty acids (VLCFAs) serve as precursors for ceramide and sphingolipids. Involved in hormone production as it metabolizes 4-androstendione (androst-4-ene-3,17-dione) into testosterone and estrone into estradiol (17beta-estradiol) in vitro, but the physiological steroid substrate is unknown. The chain is Very-long-chain 3-oxooacyl-coA reductase let-767 (let-767) from Caenorhabditis elegans.